A 154-amino-acid polypeptide reads, in one-letter code: SsrA-binding protein (154 aa).

The tract at residues 132-154 (KRESIKKRQDKRDMERALKRGAE) is disordered.

It belongs to the SmpB family.

It localises to the cytoplasm. Its function is as follows. Required for rescue of stalled ribosomes mediated by trans-translation. Binds to transfer-messenger RNA (tmRNA), required for stable association of tmRNA with ribosomes. tmRNA and SmpB together mimic tRNA shape, replacing the anticodon stem-loop with SmpB. tmRNA is encoded by the ssrA gene; the 2 termini fold to resemble tRNA(Ala) and it encodes a 'tag peptide', a short internal open reading frame. During trans-translation Ala-aminoacylated tmRNA acts like a tRNA, entering the A-site of stalled ribosomes, displacing the stalled mRNA. The ribosome then switches to translate the ORF on the tmRNA; the nascent peptide is terminated with the 'tag peptide' encoded by the tmRNA and targeted for degradation. The ribosome is freed to recommence translation, which seems to be the essential function of trans-translation. This chain is SsrA-binding protein, found in Acaryochloris marina (strain MBIC 11017).